The following is a 264-amino-acid chain: 3-methyl-2-oxobutanoate hydroxymethyltransferase (264 aa).

Positions 45 and 84 each coordinate Mg(2+). 3-methyl-2-oxobutanoate contacts are provided by residues 45-46 (DS), D84, and K112. E114 contributes to the Mg(2+) binding site. The active-site Proton acceptor is the E181.

The protein belongs to the PanB family. In terms of assembly, homodecamer; pentamer of dimers. Mg(2+) serves as cofactor.

The protein resides in the cytoplasm. The enzyme catalyses 3-methyl-2-oxobutanoate + (6R)-5,10-methylene-5,6,7,8-tetrahydrofolate + H2O = 2-dehydropantoate + (6S)-5,6,7,8-tetrahydrofolate. Its pathway is cofactor biosynthesis; (R)-pantothenate biosynthesis; (R)-pantoate from 3-methyl-2-oxobutanoate: step 1/2. Functionally, catalyzes the reversible reaction in which hydroxymethyl group from 5,10-methylenetetrahydrofolate is transferred onto alpha-ketoisovalerate to form ketopantoate. The sequence is that of 3-methyl-2-oxobutanoate hydroxymethyltransferase from Aeromonas salmonicida (strain A449).